Reading from the N-terminus, the 758-residue chain is CRISPR system single-strand-specific deoxyribonuclease Cas10/Csm1 (subtype III-A) (758 aa).

Positions 1-82 are HD domain; that stretch reads MKKEKIDLFY…TYIADNIASG (82 aa). In terms of domain architecture, GGDEF spans 509–647; that stretch reads KRLAVVRLDV…EKDSISLFSS (139 aa).

This sequence belongs to the CRISPR-associated Cas10/Csm1 family. As to quaternary structure, part of the Csm effector complex that includes at least Cas10(1), Csm2(3), Csm3(5), Csm4(1), Csm5(1) and mature crRNA. The Csm complex is elongated and slightly twisted with a maximal length of 215 Angstroms and a diameter of 75-80 Angstroms. It has been modeled to have a central protein filamant of Csm3 subunits along which the dsRNA helix of paired crRNA and target RNA binds. The filament is capped at one end by Cas10 and Csm4 and at the other end by Csm5; ssDNA is thought to bind to the N-terminal HD domain of Cas10. Csm with a precursor crRNA does not include Csm5, while Cas6, the enzyme probably involved in pre-crRNA processing, is found associated with a subset of the Csm complex. Requires a divalent metal cation as cofactor.

It carries out the reaction 6 ATP = cyclic hexaadenylate + 6 diphosphate. Its activity is regulated as follows. ssDNase activity is activated by target RNA binding to the Csm-crRNA complex and is inhibited by EDTA. Its function is as follows. CRISPR (clustered regularly interspaced short palindromic repeat) is an adaptive immune system that provides protection against mobile genetic elements (viruses, transposable elements and conjugative plasmids). CRISPR clusters contain spacers, sequences complementary to antecedent mobile elements, and target invading nucleic acids. CRISPR clusters are transcribed and processed into CRISPR RNA (crRNA). The type III-A Csm effector complex binds crRNA and acts as a crRNA-guided RNase, DNase and cyclic oligoadenylate synthase; binding of target RNA cognate to the crRNA is required for all activities. In a heterologous host this Csm effector complex restricts ssRNA phage MS2, suggesting it may target RNA viruses in vivo. In terms of biological role, csm functions as a non-specific ssDNase. Base-pairing between crRNA and target RNA to form a ternary Csm complex activates a ssDNase activity; target RNA cleavage suppresses the ssDNase, a temporal control that prevents uncontrolled DNA degradation. Viral RNA transcripts probably tether the Csm complex to the viral genome, recruiting Cas10 ssDNA activity which is able to degrade DNA in the transcription bubble, spatially controlling the DNase activity. This subunit has a weak ssDNase activity that is dramatically activated by the ternary Csm effector complex (the crRNA, Cas proteins and a cognate target ssRNA). Target RNA and ssDNA are cleaved simultaneously, although RNase activity (of Csm3) is much faster. RNA cleavage by Csm3 is not required for ssDNase activity as Csm complex with inactive Csm3 still has ssDNase activity; however as the cleaved target RNA products dissociate away ssDNase activity decreases. Self-recognition, with subsequent repression of the ssDNase activity, occurs when the 5' handle of the crRNA bases pairs with the 3' flanking sequence of the target RNA (which would occur if the CRISPR locus were transcribed as an anti-pre-crRNA). This protein has low activity on dsDNA which is not stimulated by the Csm complex. Functionally, this subunit is a single-strand-specific deoxyribonuclease (ssDNase) which digests both linear and circular ssDNA; it has both exo- and endonuclease activity. Its function is as follows. When associated with the ternary Csm effector complex (the crRNA, Cas proteins and a cognate target ssRNA) synthesizes cyclic oligoadenylates (cOA) from ATP, producing cyclic triadenylate (cA3) up to cyclic hexaadenylate (cA6), which is the active cOA. The enzyme is also able to cyclize pppA3 up to pppA6. cOAs are second messengers that induce an antiviral state important for defense against invading nucleic acids. Synthesis of cOA can occur with AMP plus ATP, 2'dATP or 3'dATP (but no other nucleotides), and requires a free 3'-OH ribose moiety. This Streptococcus thermophilus protein is CRISPR system single-strand-specific deoxyribonuclease Cas10/Csm1 (subtype III-A).